Consider the following 194-residue polypeptide: GTP cyclohydrolase 1 (194 aa).

Residues cysteine 83, histidine 86, and cysteine 155 each contribute to the Zn(2+) site.

This sequence belongs to the GTP cyclohydrolase I family. In terms of assembly, toroid-shaped homodecamer, composed of two pentamers of five dimers.

The catalysed reaction is GTP + H2O = 7,8-dihydroneopterin 3'-triphosphate + formate + H(+). Its pathway is cofactor biosynthesis; 7,8-dihydroneopterin triphosphate biosynthesis; 7,8-dihydroneopterin triphosphate from GTP: step 1/1. The polypeptide is GTP cyclohydrolase 1 (Streptococcus pyogenes serotype M5 (strain Manfredo)).